The primary structure comprises 984 residues: Serine/threonine-protein kinase Nek9 (984 aa).

Residue Ser-2 is modified to N-acetylserine. A phosphoserine mark is found at Ser-2, Ser-13, Ser-16, and Ser-20. The disordered stretch occupies residues 14–43 (INSDFGSESGGGGDSGPGPSAVPGPRAGGG). Tyr-52 carries the post-translational modification Phosphotyrosine. Residues 52–308 (YIPIRVLGRG…ADALLDLPLL (257 aa)) enclose the Protein kinase domain. 58 to 66 (LGRGAFGEA) lines the ATP pocket. Ser-76 carries the phosphoserine modification. Lys-81 contacts ATP. Asp-176 functions as the Proton acceptor in the catalytic mechanism. The residue at position 210 (Thr-210) is a Phosphothreonine; by autocatalysis. At Thr-254 the chain carries Phosphothreonine. A Phosphoserine modification is found at Ser-331. Phosphothreonine is present on Thr-333. RCC1 repeat units follow at residues 388–444 (KELY…VTDE), 445–498 (GQLY…LTRN), 499–550 (KEVY…LTQS), 551–615 (GKVL…IDER), 616–668 (GRLL…ATDD), and 669–726 (NHIF…IVEK). The interaction with NEK6 stretch occupies residues 732-896 (TIRSNSSGLS…GKALTSAACA (165 aa)). Ser-741 is modified (phosphoserine). The interval 744-790 (TVVQSSSPGGGIGGGGGGGGGGGGEEEDSQQESETPDPSGGFRGTME) is disordered. Residues 751–766 (PGGGIGGGGGGGGGGG) show a composition bias toward gly residues. A compositionally biased stretch (acidic residues) spans 767 to 778 (GEEEDSQQESET). Ser-808 and Ser-839 each carry phosphoserine. Residue Thr-891 is modified to Phosphothreonine. Residues 896–945 (ACSALQVEVDRLQALVLKCLEEQQKLQQENLQMFTQLQKLNKKLEGGQQV) adopt a coiled-coil conformation. The tract at residues 940-984 (EGGQQVGMHSRGTQTAKEEMEMDPKPDLDSESWCLLGTDSCRPSL) is disordered. Ser-949 carries the post-translational modification Phosphoserine. Over residues 955 to 967 (AKEEMEMDPKPDL) the composition is skewed to basic and acidic residues. At Ser-983 the chain carries Phosphoserine.

It belongs to the protein kinase superfamily. NEK Ser/Thr protein kinase family. NIMA subfamily. Homodimer; homodimerization is required to activate NEK7. Binds to Ran GTPase. Has a greater affinity for Ran-GDP over Ran-GTP. Interacts with SSRP1 and SUPT16H, the 2 subunits of the FACT complex. Interacts with DYNLL1; phosphorylation at Ser-949 strongly reduces DYNLL1 binding. The cofactor is Mg(2+). Autophosphorylated on serine and threonine residues. When complexed with FACT, exhibits markedly elevated phosphorylation on Thr-210. During mitosis, not phosphorylated on Thr-210. Phosphorylated by CDK1 in vitro.

The protein localises to the cytoplasm. It localises to the nucleus. The enzyme catalyses L-seryl-[protein] + ATP = O-phospho-L-seryl-[protein] + ADP + H(+). It carries out the reaction L-threonyl-[protein] + ATP = O-phospho-L-threonyl-[protein] + ADP + H(+). With respect to regulation, activated during mitosis by intramolecular autophosphorylation. Activity and autophosphorylation is activated by manganese &gt;&gt; magnesium ions. It is not cell-cycle regulated but activity is higher in G0-arrested cells. Pleiotropic regulator of mitotic progression, participating in the control of spindle dynamics and chromosome separation. Phosphorylates different histones, myelin basic protein, beta-casein, and BICD2. Phosphorylates histone H3 on serine and threonine residues and beta-casein on serine residues. Important for G1/S transition and S phase progression. Phosphorylates NEK6 and NEK7 and stimulates their activity by releasing the autoinhibitory functions of Tyr-108 and Tyr-97 respectively. The protein is Serine/threonine-protein kinase Nek9 of Mus musculus (Mouse).